The sequence spans 543 residues: CTP synthase (543 aa).

Residues M1 to L266 are amidoligase domain. Residue S14 coordinates CTP. Position 14 (S14) interacts with UTP. ATP-binding positions include S15 to I20 and D72. The Mg(2+) site is built by D72 and E140. CTP contacts are provided by residues D147 to E149, K187 to Q192, and K223. UTP is bound by residues K187–Q192 and K223. K239–V241 lines the ATP pocket. The region spanning T291–K538 is the Glutamine amidotransferase type-1 domain. Position 352 (G352) interacts with L-glutamine. C379 (nucleophile; for glutamine hydrolysis) is an active-site residue. L-glutamine contacts are provided by residues L380–Q383, E403, and R466. Active-site residues include H511 and E513.

It belongs to the CTP synthase family. In terms of assembly, homotetramer.

It carries out the reaction UTP + L-glutamine + ATP + H2O = CTP + L-glutamate + ADP + phosphate + 2 H(+). The catalysed reaction is L-glutamine + H2O = L-glutamate + NH4(+). The enzyme catalyses UTP + NH4(+) + ATP = CTP + ADP + phosphate + 2 H(+). The protein operates within pyrimidine metabolism; CTP biosynthesis via de novo pathway; CTP from UDP: step 2/2. Its activity is regulated as follows. Allosterically activated by GTP, when glutamine is the substrate; GTP has no effect on the reaction when ammonia is the substrate. The allosteric effector GTP functions by stabilizing the protein conformation that binds the tetrahedral intermediate(s) formed during glutamine hydrolysis. Inhibited by the product CTP, via allosteric rather than competitive inhibition. Functionally, catalyzes the ATP-dependent amination of UTP to CTP with either L-glutamine or ammonia as the source of nitrogen. Regulates intracellular CTP levels through interactions with the four ribonucleotide triphosphates. This chain is CTP synthase, found in Baumannia cicadellinicola subsp. Homalodisca coagulata.